The following is a 295-amino-acid chain: MSYKSGFVTIIGRPNVGKSTLMNQIIGEKIAIMSDKPQTTRNKIQSVYSQEDFQIVFLDTPGIHKPKHKLGEYMVKVARDTLKEVDVVLFLVDEGQKIGPGDRFIMEQLKDIKTPMFLIINKIDKMNQEILNEVCGLFEETGLFQRIIPISALEGANIDTLIKQIVSFLPEGPQYFPSDMITDQPERLLVAEIVREKLLHYLDQEIPHGIAVETSMMKQRPNQDIVDIQATIYCEKKSHKGIIIGKGGRKLKGVGKSARQDIEKLLGSKVFLELWVKVNEDWRNQSRILKSLGYE.

The Era-type G domain maps to 4–171; sequence KSGFVTIIGR…IKQIVSFLPE (168 aa). The interval 12-19 is G1; the sequence is GRPNVGKS. A GTP-binding site is contributed by 12–19; it reads GRPNVGKS. The tract at residues 38 to 42 is G2; sequence QTTRN. A G3 region spans residues 59–62; it reads DTPG. GTP-binding positions include 59 to 63 and 121 to 124; these read DTPGI and NKID. The tract at residues 121–124 is G4; the sequence is NKID. Positions 150-152 are G5; the sequence is ISA. The KH type-2 domain maps to 202–280; the sequence is LDQEIPHGIA…FLELWVKVNE (79 aa).

This sequence belongs to the TRAFAC class TrmE-Era-EngA-EngB-Septin-like GTPase superfamily. Era GTPase family. Monomer.

It localises to the cytoplasm. Its subcellular location is the cell membrane. Its function is as follows. An essential GTPase that binds both GDP and GTP, with rapid nucleotide exchange. Plays a role in 16S rRNA processing and 30S ribosomal subunit biogenesis and possibly also in cell cycle regulation and energy metabolism. This Alkaliphilus metalliredigens (strain QYMF) protein is GTPase Era.